A 364-amino-acid polypeptide reads, in one-letter code: Succinyl-diaminopimelate desuccinylase (364 aa).

A Zn(2+)-binding site is contributed by histidine 66. Aspartate 68 is an active-site residue. Aspartate 97 contributes to the Zn(2+) binding site. Glutamate 127 serves as the catalytic Proton acceptor. Zn(2+) contacts are provided by glutamate 128, glutamate 156, and histidine 341.

This sequence belongs to the peptidase M20A family. DapE subfamily. As to quaternary structure, homodimer. Zn(2+) serves as cofactor. It depends on Co(2+) as a cofactor.

The enzyme catalyses N-succinyl-(2S,6S)-2,6-diaminopimelate + H2O = (2S,6S)-2,6-diaminopimelate + succinate. The protein operates within amino-acid biosynthesis; L-lysine biosynthesis via DAP pathway; LL-2,6-diaminopimelate from (S)-tetrahydrodipicolinate (succinylase route): step 3/3. Functionally, catalyzes the hydrolysis of N-succinyl-L,L-diaminopimelic acid (SDAP), forming succinate and LL-2,6-diaminopimelate (DAP), an intermediate involved in the bacterial biosynthesis of lysine and meso-diaminopimelic acid, an essential component of bacterial cell walls. In Wolinella succinogenes (strain ATCC 29543 / DSM 1740 / CCUG 13145 / JCM 31913 / LMG 7466 / NCTC 11488 / FDC 602W) (Vibrio succinogenes), this protein is Succinyl-diaminopimelate desuccinylase.